The primary structure comprises 248 residues: Inner membrane protein pE248R (248 aa).

Glycine 2 carries the N-myristoyl glycine; by host lipid modification. Residues 2–199 lie on the Cytoplasmic side of the membrane; that stretch reads GGSTSKNSFK…ADAISAVFKN (198 aa). A helical membrane pass occupies residues 200–220; it reads IMVAAVVIVLIIVGFIAVFYF. Residues 221-248 are Extracellular-facing; the sequence is LHSRHRHEEEEEAEPLISNKVLKNAAVS.

This sequence belongs to the asfivirus E248R family. In terms of assembly, interacts with A151R.

It localises to the host membrane. The protein localises to the virion membrane. In terms of biological role, essential for viral fusion with host endosomal membrane and core release. This is Inner membrane protein pE248R from Ornithodoros (relapsing fever ticks).